A 529-amino-acid polypeptide reads, in one-letter code: Serine hydroxymethyltransferase 3, chloroplastic (529 aa).

The transit peptide at 1-60 directs the protein to the chloroplast; it reads MQACCGGNSMASLQQPGRVQGSVFPPIMPPVTKFSQQLKFNISKPFRSSFLKRNLVSEMR. An N6-(pyridoxal phosphate)lysine modification is found at K314.

The protein belongs to the SHMT family. As to quaternary structure, homotetramer. Pyridoxal 5'-phosphate is required as a cofactor.

Its subcellular location is the plastid. The protein resides in the chloroplast. It carries out the reaction (6R)-5,10-methylene-5,6,7,8-tetrahydrofolate + glycine + H2O = (6S)-5,6,7,8-tetrahydrofolate + L-serine. It functions in the pathway one-carbon metabolism; tetrahydrofolate interconversion. With respect to regulation, inhibited by 5-CH3-H4PteGlu1/5 and 5-HCO-H4PteGlu1/5 in vitro. Functionally, catalyzes the interconversion of serine and glycine and directs the hydroxymethyl moiety of serine into the metabolic network of H4PteGlu(n)-bound one-carbon units. This Arabidopsis thaliana (Mouse-ear cress) protein is Serine hydroxymethyltransferase 3, chloroplastic.